We begin with the raw amino-acid sequence, 255 residues long: 1-(5-phosphoribosyl)-5-[(5-phosphoribosylamino)methylideneamino] imidazole-4-carboxamide isomerase (255 aa).

The active-site Proton acceptor is D8. The active-site Proton donor is D129.

This sequence belongs to the HisA/HisF family.

The protein localises to the cytoplasm. The catalysed reaction is 1-(5-phospho-beta-D-ribosyl)-5-[(5-phospho-beta-D-ribosylamino)methylideneamino]imidazole-4-carboxamide = 5-[(5-phospho-1-deoxy-D-ribulos-1-ylimino)methylamino]-1-(5-phospho-beta-D-ribosyl)imidazole-4-carboxamide. Its pathway is amino-acid biosynthesis; L-histidine biosynthesis; L-histidine from 5-phospho-alpha-D-ribose 1-diphosphate: step 4/9. The protein is 1-(5-phosphoribosyl)-5-[(5-phosphoribosylamino)methylideneamino] imidazole-4-carboxamide isomerase of Prochlorococcus marinus (strain MIT 9312).